The sequence spans 464 residues: Probable glycine dehydrogenase (decarboxylating) subunit 1 (464 aa).

The protein belongs to the GcvP family. N-terminal subunit subfamily. As to quaternary structure, the glycine cleavage system is composed of four proteins: P, T, L and H. In this organism, the P 'protein' is a heterodimer of two subunits.

The enzyme catalyses N(6)-[(R)-lipoyl]-L-lysyl-[glycine-cleavage complex H protein] + glycine + H(+) = N(6)-[(R)-S(8)-aminomethyldihydrolipoyl]-L-lysyl-[glycine-cleavage complex H protein] + CO2. In terms of biological role, the glycine cleavage system catalyzes the degradation of glycine. The P protein binds the alpha-amino group of glycine through its pyridoxal phosphate cofactor; CO(2) is released and the remaining methylamine moiety is then transferred to the lipoamide cofactor of the H protein. The protein is Probable glycine dehydrogenase (decarboxylating) subunit 1 of Thiobacillus denitrificans (strain ATCC 25259 / T1).